Reading from the N-terminus, the 294-residue chain is ATP synthase gamma chain (294 aa).

Belongs to the ATPase gamma chain family. In terms of assembly, F-type ATPases have 2 components, CF(1) - the catalytic core - and CF(0) - the membrane proton channel. CF(1) has five subunits: alpha(3), beta(3), gamma(1), delta(1), epsilon(1). CF(0) has three main subunits: a, b and c.

The protein localises to the cell membrane. Its function is as follows. Produces ATP from ADP in the presence of a proton gradient across the membrane. The gamma chain is believed to be important in regulating ATPase activity and the flow of protons through the CF(0) complex. This chain is ATP synthase gamma chain, found in Opitutus terrae (strain DSM 11246 / JCM 15787 / PB90-1).